Reading from the N-terminus, the 128-residue chain is UPF0102 protein PSPTO_4420 (128 aa).

The protein belongs to the UPF0102 family.

This is UPF0102 protein PSPTO_4420 from Pseudomonas syringae pv. tomato (strain ATCC BAA-871 / DC3000).